We begin with the raw amino-acid sequence, 308 residues long: Taste receptor type 2 member 43 (308 aa).

Position 1 (Met-1) is a topological domain, extracellular. A helical transmembrane segment spans residues 2–22 (ITFLPIIFSILVVVTFVIGNC). Residues 23 to 46 (ANGFIALVNSTEWVKRQKISFADQ) are Cytoplasmic-facing. Residues 47-67 (ILTALAVSRVGLLWVLLLNWY) traverse the membrane as a helical segment. Over 68 to 86 (ATVLNPAFYSVEVRTIVYN) the chain is Extracellular. Residues 87 to 107 (LWAVINHFSNWLATSLSIFYL) traverse the membrane as a helical segment. Over 108–126 (LKIANFSNLIFLHLKRRVK) the chain is Cytoplasmic. Residues 127 to 147 (SVVLVILLGPLLFLVCHLFVV) traverse the membrane as a helical segment. Residues 148–178 (NMNEIVRTKEYEGNMTWKSKLRSAMYLSNTT) lie on the Extracellular side of the membrane. N-linked (GlcNAc...) asparagine glycans are attached at residues Asn-161 and Asn-176. Residues 179-199 (VTILANLVPFILTLISFLLLI) form a helical membrane-spanning segment. Residues 200–229 (CSLCKHLKKMQLRDKGSQDPSTKVHIKALQ) are Cytoplasmic-facing. A helical membrane pass occupies residues 230 to 249 (TVISLLLCVIYFLSIMISSW). Topologically, residues 250 to 258 (SLGRVENKA) are extracellular. Residues 259 to 279 (VFMFCKAIRFSYPSAHAFILI) traverse the membrane as a helical segment. The Cytoplasmic portion of the chain corresponds to 280-308 (WGNKKLKQTLLSVLWNVRYCVKGQKLPSP).

Belongs to the G-protein coupled receptor T2R family.

Its subcellular location is the membrane. The protein localises to the cell projection. The protein resides in the cilium membrane. In terms of biological role, gustducin-coupled receptor immplicated in the perception of bitter compounds in the oral cavity and the gastrointestinal tract. Signals through PLCB2 and the calcium-regulated cation channel TRPM5. Activated by the sulfonyl amide sweeteners saccharin and acesulfame K. In airway epithelial cells, binding of bitter compounds increases the intracellular calcium ion concentration and stimulates ciliary beat frequency. May act as chemosensory receptors in airway epithelial cells to detect and eliminate potential noxious agents from the airways. This Papio hamadryas (Hamadryas baboon) protein is Taste receptor type 2 member 43 (TAS2R43).